Here is a 746-residue protein sequence, read N- to C-terminus: Centromere protein I (746 aa).

The interval 1-24 (MATQRVTRNSQQQNRISQGSNSRQ) is disordered.

The protein belongs to the CENP-I/CTF3 family. As to quaternary structure, component of the CENPA-CAD complex, composed of CENPI, CENPK, CENPL, CENPO, CENPP, CENPQ, CENPR and CENPS. The CENPA-CAD complex interacts with the CENPA-NAC complex, at least composed of CENPA, CENPC, CENPH, CENPM, CENPN, CENPT and CENPU. Interacts with SENP6. Post-translationally, sumoylated. Sumoylated form can be polyubiquitinated by RNF4, leading to its degradation. Desumoylation by SENP6 prevents its degradation.

The protein localises to the nucleus. Its subcellular location is the chromosome. It is found in the centromere. Component of the CENPA-CAD (nucleosome distal) complex, a complex recruited to centromeres which is involved in assembly of kinetochore proteins, mitotic progression and chromosome segregation. May be involved in incorporation of newly synthesized CENPA into centromeres via its interaction with the CENPA-NAC complex. Required for the localization of CENPF, MAD1L1 and MAD2 (MAD2L1 or MAD2L2) to kinetochores. Involved in the response of gonadal tissues to follicle-stimulating hormone. The protein is Centromere protein I (Cenpi) of Mus musculus (Mouse).